The following is a 362-amino-acid chain: Holliday junction branch migration complex subunit RuvB (362 aa).

Positions 1–183 (MADSSLVGGG…FGFTGHLEFY (183 aa)) are large ATPase domain (RuvB-L). Residues Leu22, Arg23, Gly64, Lys67, Thr68, Thr69, 130–132 (EDF), Arg173, Tyr183, and Arg220 each bind ATP. Thr68 contacts Mg(2+). Residues 184–254 (SVEELELVLR…TASAALDMYE (71 aa)) are small ATPAse domain (RuvB-S). Positions 257–362 (KRGLDRLDRS…PVAEWLPNGQ (106 aa)) are head domain (RuvB-H). Arg312 and Arg317 together coordinate DNA.

It belongs to the RuvB family. Homohexamer. Forms an RuvA(8)-RuvB(12)-Holliday junction (HJ) complex. HJ DNA is sandwiched between 2 RuvA tetramers; dsDNA enters through RuvA and exits via RuvB. An RuvB hexamer assembles on each DNA strand where it exits the tetramer. Each RuvB hexamer is contacted by two RuvA subunits (via domain III) on 2 adjacent RuvB subunits; this complex drives branch migration. In the full resolvosome a probable DNA-RuvA(4)-RuvB(12)-RuvC(2) complex forms which resolves the HJ.

It is found in the cytoplasm. The catalysed reaction is ATP + H2O = ADP + phosphate + H(+). Functionally, the RuvA-RuvB-RuvC complex processes Holliday junction (HJ) DNA during genetic recombination and DNA repair, while the RuvA-RuvB complex plays an important role in the rescue of blocked DNA replication forks via replication fork reversal (RFR). RuvA specifically binds to HJ cruciform DNA, conferring on it an open structure. The RuvB hexamer acts as an ATP-dependent pump, pulling dsDNA into and through the RuvAB complex. RuvB forms 2 homohexamers on either side of HJ DNA bound by 1 or 2 RuvA tetramers; 4 subunits per hexamer contact DNA at a time. Coordinated motions by a converter formed by DNA-disengaged RuvB subunits stimulates ATP hydrolysis and nucleotide exchange. Immobilization of the converter enables RuvB to convert the ATP-contained energy into a lever motion, pulling 2 nucleotides of DNA out of the RuvA tetramer per ATP hydrolyzed, thus driving DNA branch migration. The RuvB motors rotate together with the DNA substrate, which together with the progressing nucleotide cycle form the mechanistic basis for DNA recombination by continuous HJ branch migration. Branch migration allows RuvC to scan DNA until it finds its consensus sequence, where it cleaves and resolves cruciform DNA. The sequence is that of Holliday junction branch migration complex subunit RuvB from Arthrobacter sp. (strain FB24).